Here is a 683-residue protein sequence, read N- to C-terminus: ATP-dependent zinc metalloprotease FtsH 2 (683 aa).

Over residues 1 to 12 (MADQTSQNDNQN) the composition is skewed to polar residues. Residues 1–21 (MADQTSQNDNQNGSGLPGGGP) are disordered. The Cytoplasmic segment spans residues 1-28 (MADQTSQNDNQNGSGLPGGGPSGTGRGR). Residues 29 to 49 (LIIWVIAGTLLALWAYSYWGM) traverse the membrane as a helical segment. The Periplasmic segment spans residues 50–136 (GASGGERISY…VTKPESSFPW (87 aa)). Residues 137 to 157 (GLVIMGLLPVLLLFGVGYIFL) traverse the membrane as a helical segment. The Cytoplasmic portion of the chain corresponds to 158-683 (RRMQSQGQGL…ASGSADASGS (526 aa)). Residue 228 to 235 (GPPGTGKT) coordinates ATP. Histidine 450 provides a ligand contact to Zn(2+). Glutamate 451 is a catalytic residue. Histidine 454 and aspartate 526 together coordinate Zn(2+). The tract at residues 627–683 (VNGDTDEIGHMPTTNGAAASEENGSADDHEPDEATVIEEDGESGEGRASGSADASGS) is disordered. Residues 655 to 669 (HEPDEATVIEEDGES) are compositionally biased toward acidic residues. Over residues 672–683 (GRASGSADASGS) the composition is skewed to low complexity.

It in the central section; belongs to the AAA ATPase family. This sequence in the C-terminal section; belongs to the peptidase M41 family. Homohexamer. It depends on Zn(2+) as a cofactor.

It is found in the cell inner membrane. Functionally, acts as a processive, ATP-dependent zinc metallopeptidase for both cytoplasmic and membrane proteins. Plays a role in the quality control of integral membrane proteins. In Salinibacter ruber (strain M8), this protein is ATP-dependent zinc metalloprotease FtsH 2.